Here is a 418-residue protein sequence, read N- to C-terminus: MGSDAKNLMSDGNVQIVKTGEVIGATQLTEGELIVEAGGRAENTVVTGAGWLKVATGGIAKCTQYGNNGTLSVSDGAIATDIVQSEGGAISLSTLATVNGRHPEGEFSVDKGYACGLLLENGGNLRVLEGHRAEKIILDQEGGLLVNGTTSAVVVDEGGELLVYPGGEASNCEINQGGVFMLAGKASDTLLAGGTMNNLGGEDSDTIVENGSIYRLGTDGLQLYSSGKTQNLSVNVGGRAEVHAGTLENAVIQGGTVILLSPTSADENFVVEEDRAPVELTGSVALLDGASMIIGYGAELQQSTITVQQGGVLILDGSTVKGDSVTFIVGNINLNGGKLWLITDAATHVQLKVKRLRGEGAICLQTSAKEISPDFINVKGEVTGDIHVEITDASRQTLCNALKLQPDEDGIGATLQPA.

This Escherichia coli (strain K12) protein is Protein YdhQ (ydhQ).